A 648-amino-acid polypeptide reads, in one-letter code: Threonine--tRNA ligase (648 aa).

The 61-residue stretch at 1–61 (MIDIILPDGS…INTATVKAIT (61 aa)) folds into the TGS domain. The tract at residues 243-549 (DHRKLGRELE…LIEHYSGRLP (307 aa)) is catalytic. The Zn(2+) site is built by cysteine 349, histidine 400, and histidine 526.

The protein belongs to the class-II aminoacyl-tRNA synthetase family. In terms of assembly, homodimer. The cofactor is Zn(2+).

Its subcellular location is the cytoplasm. It catalyses the reaction tRNA(Thr) + L-threonine + ATP = L-threonyl-tRNA(Thr) + AMP + diphosphate + H(+). In terms of biological role, catalyzes the attachment of threonine to tRNA(Thr) in a two-step reaction: L-threonine is first activated by ATP to form Thr-AMP and then transferred to the acceptor end of tRNA(Thr). Also edits incorrectly charged L-seryl-tRNA(Thr). This chain is Threonine--tRNA ligase, found in Orientia tsutsugamushi (strain Boryong) (Rickettsia tsutsugamushi).